We begin with the raw amino-acid sequence, 744 residues long: Tripartite motif-containing protein 3 (744 aa).

Residue Ala-2 is modified to N-acetylalanine. Positions 2-290 (AKREDSPGPE…LAAQAFPERP (289 aa)) are interaction with KIF21B. Residue Ser-7 is modified to Phosphoserine. The segment at 22–63 (CSICLDRYRCPKVLPCLHTFCERCLQNYIPPQSLTLSCPVCR) adopts an RING-type zinc-finger fold. The B box-type zinc-finger motif lies at 110–151 (GRPLSCPNHEGKTMEFYCEACETAMCGECRAGEHREHGTVLL). Zn(2+)-binding residues include Cys-115, His-118, Cys-138, and His-143. Positions 153 to 224 (DVVEQHKAAL…RKQALVSDLE (72 aa)) form a coiled coil. A Filamin repeat occupies 317-418 (TTSAAAHETV…VRGSPFRVRA (102 aa)). Positions 420–462 (RPGDLPPSPDDVKRRVKSPGGPGSHVRQKAVRRPSSMYSTGGK) are disordered. The residue at position 427 (Ser-427) is a Phosphoserine. NHL repeat units lie at residues 473–516 (VFRV…FSNE), 520–563 (KFRF…FSPE), 564–605 (GKFK…FQPN), 609–652 (VGRF…YSAD), 656–699 (LFKF…FDSS), and 700–743 (GSFL…YRYL).

This sequence belongs to the TRIM/RBCC family. In terms of assembly, forms homooligomers. Interacts with TRIM2; this interaction reduces TRIM2 activity. Associates with myosin-Vb (MYO5B) and alpha-actinin-4 (ACTN4). Component of the CART complex, at least composed of ACTN4, HGS/HRS, MYO5B and TRIM3. Interacts with ZFYVE28/LST2. Interacts with KIF21B. As to expression, highly expressed in the brain, moderate levels in the lung, very low levels in the liver, kidney and heart. In the brain, expression was highest in the cerebellum. Expression in the brain is found at low levels at embryonic day 15 and then increases during the first two postnatal weeks before decreasing through adulthood.

It is found in the cytoplasm. Its subcellular location is the early endosome. The protein resides in the golgi apparatus. It localises to the trans-Golgi network. The protein localises to the cell projection. It is found in the dendrite. The enzyme catalyses S-ubiquitinyl-[E2 ubiquitin-conjugating enzyme]-L-cysteine + [acceptor protein]-L-lysine = [E2 ubiquitin-conjugating enzyme]-L-cysteine + N(6)-ubiquitinyl-[acceptor protein]-L-lysine.. Its function is as follows. E3 ubiquitin ligase that plays essential roles in neuronal functions such as regulation of neuronal plasticity, learning, and memory. In addition to its neuronal functions, participates in other biological processes such as innate immunity or cell cycle regulation. Component of the cytoskeleton-associated recycling or transport complex in neurons, polyubiquitinates gamma-actin, thus regulating neuronal plasticity, learning, and memory. Ubiquitinates postsynaptic scaffold GKAP, a neuronal substrate involved in synaptic remodeling and thereby modulates dendritic spine morphology. Positively regulates motility of microtubule-dependent motor protein KIF21B. Induces growth arrest via its RING-dependent E3 ligase activity and ubiquinates CDKN1A. Positively regulates TLR3-mediated signaling by mediating 'Lys-63'-linked polyubiquitination of TLR3. In turn, promotes the recognition and sorting of polyubiquitinated TLR3 by the ESCRT complexes. In Rattus norvegicus (Rat), this protein is Tripartite motif-containing protein 3 (Trim3).